A 750-amino-acid chain; its full sequence is MSDRYELFLTCPKGLEGLLAEEATALGLQETREHTSAIRGSADMETAYRLCLWSRLANRVLLVLKRFPMKDAEDLYHGVLDVEWQDHLESDGTIAVEFSGHGSGIDNTHFGALKVKDAIVDKLRTPDGERPSVDKINPDLRVHLRLDRGEAILSLDLSGHSLHQRGYRLQQGAAPLKENLAAAILIRAGWPRIAAEGGALADPMCGVGTFLVEAGMIAADIAPNIKRERWGFSAWLGHVPALWRKLHDEALARAEAGLAKTPSWIRGYEADPRLIQPGRNNIERAGLSDWIKVYQGEVATFEPRPDQNQKGLVICNPPYGERLGDEASLLYLYQNLGERLRQACLNWEAAVFTGAPDLGKRMGIRSHKQYSFWNGALPCKLLLIKVTPDQFVTGERRTPEQRQIERENPVEVEVVERKLNKNGNPIKPEPVVVEQARLSEGGQMFANRLQKNLKLMGKWVRREGIDRYRVYDADMPEYSLAIDLYHDWVHVQEYAAPKSIDPEKASARLFDALAAIPQALNIDKNRVVIKRRERQSGTKQYERQSAQGQFLEVSEGGVKLLVNLTDYLDTGLFLDHRPMRMRIQREASGKRFLNLFAYTATASVHAAKGGARSTTSIDLSRTYLDWARRNLSLNGFSDKNRLEQGDVMAWLQANRDEYDLIFIDPPTFSNSKRMEGIFDVQRDQVELIDLAMARLAPGGVLYFSNNFRKFVLDENLSQRYAVEDITAQTIDQDFARNGKIHRAWKIMARA.

One can recognise a THUMP domain in the interval 46-157 (TAYRLCLWSR…RGEAILSLDL (112 aa)).

This sequence belongs to the methyltransferase superfamily. RlmKL family.

The protein localises to the cytoplasm. It carries out the reaction guanosine(2445) in 23S rRNA + S-adenosyl-L-methionine = N(2)-methylguanosine(2445) in 23S rRNA + S-adenosyl-L-homocysteine + H(+). The catalysed reaction is guanosine(2069) in 23S rRNA + S-adenosyl-L-methionine = N(2)-methylguanosine(2069) in 23S rRNA + S-adenosyl-L-homocysteine + H(+). In terms of biological role, specifically methylates the guanine in position 2445 (m2G2445) and the guanine in position 2069 (m7G2069) of 23S rRNA. The polypeptide is Ribosomal RNA large subunit methyltransferase K/L (Pseudomonas savastanoi pv. phaseolicola (strain 1448A / Race 6) (Pseudomonas syringae pv. phaseolicola (strain 1448A / Race 6))).